Reading from the N-terminus, the 917-residue chain is Hexokinase HKDC1 (917 aa).

The interval 1–20 (MFAVHLMAFYFSKLKEDQIK) is mitochondrial-binding peptide (MBP). Hexokinase domains follow at residues 16-458 (EDQI…MVTA) and 464-905 (QAQR…LITA). ATP is bound by residues arginine 30 and 84 to 89 (DLGGSK). Residues 73-207 (DGSENGEFLS…DMDVDILALV (135 aa)) are hexokinase small subdomain 1. 84-91 (DLGGSKFR) serves as a coordination point for D-glucose 6-phosphate. D-glucose contacts are provided by residues serine 155, 172–173 (TK), and 208–209 (ND). Positions 208–447 (NDTVGTMMTC…CDVRFLLSES (240 aa)) are hexokinase large subdomain 1. Positions 209 and 232 each coordinate D-glucose 6-phosphate. Residues asparagine 235, glutamate 260, and 291 to 294 (QLFE) each bind D-glucose. 413-415 (DGT) is a binding site for D-glucose 6-phosphate. 425-426 (KR) is a binding site for ATP. D-glucose 6-phosphate-binding positions include serine 449 and 532 to 536 (DLGGT). The interval 521-654 (DGTEKGKFLA…EFDLDIVAVV (134 aa)) is hexokinase small subdomain 2. ATP is bound at residue 532–537 (DLGGTN). D-glucose contacts are provided by residues 602 to 603 (SF), 619 to 620 (TK), and 655 to 656 (ND). The hexokinase large subdomain 2 stretch occupies residues 655 to 894 (NDTVGTMMTC…CDVTFMLSED (240 aa)). Aspartate 656 and threonine 679 together coordinate D-glucose 6-phosphate. Threonine 679 is an ATP binding site. Residues 681-682 (SN), glutamate 707, and glutamate 741 contribute to the D-glucose site. ATP is bound by residues 746–747 (GM), 783–787 (TKFLS), and 862–866 (TLYKL). D-glucose 6-phosphate contacts are provided by residues 860-862 (DGT) and serine 896.

Belongs to the hexokinase family. In terms of tissue distribution, widely expressed. Highly expressed in the brush border, surface epithelium and the myenteric plexus of the small and large intestines; the acinar centrocytes and interlobular ducts of the pancreas; and the alveolar macrophages in the lungs (at protein level). Present at moderate level in the thyroid follicular epithelium (at protein level).

It localises to the cytoplasm. Its subcellular location is the mitochondrion membrane. The protein localises to the photoreceptor inner segment. It catalyses the reaction a D-hexose + ATP = a D-hexose 6-phosphate + ADP + H(+). The enzyme catalyses D-glucose + ATP = D-glucose 6-phosphate + ADP + H(+). It functions in the pathway carbohydrate metabolism; hexose metabolism. It participates in carbohydrate degradation; glycolysis; D-glyceraldehyde 3-phosphate and glycerone phosphate from D-glucose: step 1/4. Its function is as follows. Catalyzes the phosphorylation of hexose to hexose 6-phosphate, although at very low level compared to other hexokinases. Has low glucose phosphorylating activity compared to other hexokinases. Involved in glucose homeostasis and hepatic lipid accumulation. Required to maintain whole-body glucose homeostasis during pregnancy; however additional evidences are required to confirm this role. The chain is Hexokinase HKDC1 from Homo sapiens (Human).